We begin with the raw amino-acid sequence, 285 residues long: Steroidogenic acute regulatory protein, mitochondrial (285 aa).

A mitochondrion-targeting transit peptide spans 1–61 (MLPATFKLCA…RRSSLLSSPI (61 aa)). In terms of domain architecture, START spans 65–278 (TYSEADQCYV…LRDRMASGGG (214 aa)).

May interact with TSPO. As to expression, highly expressed in the testis and at lower levels in the ovary, kidney and head.

It localises to the mitochondrion. The catalysed reaction is cholesterol(in) = cholesterol(out). It participates in steroid metabolism; cholesterol metabolism. Its function is as follows. Plays a key role in steroid hormone synthesis by enhancing the metabolism of cholesterol into pregnenolone. Mediates the transfer of cholesterol from the outer mitochondrial membrane to the inner mitochondrial membrane where it is cleaved to pregnenolone. The chain is Steroidogenic acute regulatory protein, mitochondrial (star) from Danio rerio (Zebrafish).